Consider the following 153-residue polypeptide: Histone H2B.10 (153 aa).

Basic and acidic residues-rich tracts occupy residues 1-28 (MAPKAEKKPAAKKPAEEEPAAEKAEKAP) and 36-53 (EKRLPAGKAEKSSGEGKK). The disordered stretch occupies residues 1–61 (MAPKAEKKPA…KKAGRKKAKK (61 aa)). N6-acetyllysine occurs at positions 7 and 37. Residue lysine 149 forms a Glycyl lysine isopeptide (Lys-Gly) (interchain with G-Cter in ubiquitin) linkage.

Belongs to the histone H2B family. The nucleosome is a histone octamer containing two molecules each of H2A, H2B, H3 and H4 assembled in one H3-H4 heterotetramer and two H2A-H2B heterodimers. The octamer wraps approximately 147 bp of DNA. Can be acetylated to form H2BK6ac and H2BK33ac. In terms of processing, monoubiquitinated by BRE1 to form H2BK143ub1 and deubiquitinated by UBP26. Required for heterochromatic histone H3 di- and trimethylation at H3K4me. May give a specific tag for epigenetic transcriptional activation.

The protein localises to the nucleus. Its subcellular location is the chromosome. Functionally, core component of nucleosome. Nucleosomes wrap and compact DNA into chromatin, limiting DNA accessibility to the cellular machineries which require DNA as a template. Histones thereby play a central role in transcription regulation, DNA repair, DNA replication and chromosomal stability. DNA accessibility is regulated via a complex set of post-translational modifications of histones, also called histone code, and nucleosome remodeling. This is Histone H2B.10 (H2B.10) from Oryza sativa subsp. indica (Rice).